The following is a 126-amino-acid chain: MLVINMKEDLERALKNKEPSFIIKGELAEKMKKAQRITTIDKWILGALAFVFAVSFFPSTSDGLFGIIMNKILIAIGIFATFEIAIILAVILGGMTLAMMLYKNYHAEFGTDVKTEKITIKCTIKK.

2 helical membrane-spanning segments follow: residues 40–57 and 72–94; these read IDKW…VSFF and ILIA…ILGG.

Its subcellular location is the cell membrane. This is an uncharacterized protein from Pasteurella multocida (strain Pm70).